We begin with the raw amino-acid sequence, 320 residues long: o-succinylbenzoate synthase (320 aa).

Catalysis depends on lysine 133, which acts as the Proton donor. Mg(2+) contacts are provided by aspartate 161, glutamate 190, and aspartate 213. Lysine 235 serves as the catalytic Proton acceptor.

Belongs to the mandelate racemase/muconate lactonizing enzyme family. MenC type 1 subfamily. Requires a divalent metal cation as cofactor.

The catalysed reaction is (1R,6R)-6-hydroxy-2-succinyl-cyclohexa-2,4-diene-1-carboxylate = 2-succinylbenzoate + H2O. It participates in quinol/quinone metabolism; 1,4-dihydroxy-2-naphthoate biosynthesis; 1,4-dihydroxy-2-naphthoate from chorismate: step 4/7. Its pathway is quinol/quinone metabolism; menaquinone biosynthesis. Its function is as follows. Converts 2-succinyl-6-hydroxy-2,4-cyclohexadiene-1-carboxylate (SHCHC) to 2-succinylbenzoate (OSB). The sequence is that of o-succinylbenzoate synthase from Escherichia coli O127:H6 (strain E2348/69 / EPEC).